A 504-amino-acid polypeptide reads, in one-letter code: Ribose import ATP-binding protein RbsA (504 aa).

ABC transporter domains lie at leucine 6–arginine 242 and valine 252–threonine 495. Glycine 38 to serine 45 serves as a coordination point for ATP.

Belongs to the ABC transporter superfamily. Ribose importer (TC 3.A.1.2.1) family. As to quaternary structure, the complex is composed of an ATP-binding protein (RbsA), two transmembrane proteins (RbsC) and a solute-binding protein (RbsB).

Its subcellular location is the cell inner membrane. It catalyses the reaction D-ribose(out) + ATP + H2O = D-ribose(in) + ADP + phosphate + H(+). In terms of biological role, part of the ABC transporter complex RbsABC involved in ribose import. Responsible for energy coupling to the transport system. The polypeptide is Ribose import ATP-binding protein RbsA (Photobacterium profundum (strain SS9)).